A 362-amino-acid polypeptide reads, in one-letter code: Type-2 angiotensin II receptor (362 aa).

Residues 1–44 (MKANFSLATISKNITSSLHVGFVNISSNESTFNCSHKPSDKHLD) are Extracellular-facing. N-linked (GlcNAc...) asparagine glycans are attached at residues asparagine 4, asparagine 13, asparagine 24, asparagine 28, and asparagine 33. Cystine bridges form between cysteine 34–cysteine 289 and cysteine 116–cysteine 194. A helical transmembrane segment spans residues 45-69 (AIPVLYYIIFGVGFLVNTIVVTLFC). The Cytoplasmic portion of the chain corresponds to 70-79 (CQKGPKKVSS). A helical membrane pass occupies residues 80–103 (IYIFNLAVADLLLLATLPLWATYY). Residues tyrosine 102 and tyrosine 103 each contribute to the angiotensin II site. Residues 104–113 (SHRYDWIFGP) are Extracellular-facing. A helical membrane pass occupies residues 114 to 139 (VMCKVFGSFLTLNMFASIFFITCMSV). The Cytoplasmic portion of the chain corresponds to 140–158 (DRYQSVIYPFLSQRRNPWQ). A helical transmembrane segment spans residues 159–180 (ASYIVPLVWCMACLSSLPTFYF). Positions 181, 203, and 214 each coordinate angiotensin II. Over 181–205 (RDVRTIEYLGVNACIMAFPPEKYAQ) the chain is Extracellular. A helical transmembrane segment spans residues 206–231 (WSAGIALMKNILGFIIPLIFIATCYF). The Cytoplasmic portion of the chain corresponds to 232 to 256 (GIRKHLLKTNSYGKNRITRDQVLKM). Residues 257 to 280 (AAAVVLAFIICWLPFHVLTFLDAL) form a helical membrane-spanning segment. Aspartate 278 lines the angiotensin II pocket. The Extracellular segment spans residues 281–293 (AWMGVINSCEVIA). A helical membrane pass occupies residues 294–319 (VIDLALPFAILLGFTNSCINPFLYCF). Residue aspartate 296 coordinates angiotensin II. Residues 320 to 362 (VGNRFQQKLRRVFRVPITWLQGKRENGSCGKSSSFREMETFVS) lie on the Cytoplasmic side of the membrane. Residues 323 to 332 (RFQQKLRRVF) are helix VIII.

It belongs to the G-protein coupled receptor 1 family. Interacts with MTUS1.

It localises to the cell membrane. Its function is as follows. Receptor for angiotensin II, a vasoconstricting peptide. Signals primarily via a non-canonical G-protein- and beta-arrestin independent pathways. Cooperates with MTUS1 to inhibit ERK2 activation and cell proliferation. This Ovis aries (Sheep) protein is Type-2 angiotensin II receptor (AGTR2).